Here is a 562-residue protein sequence, read N- to C-terminus: NAD-dependent malic enzyme (562 aa).

Y101 functions as the Proton donor in the catalytic mechanism. Residue R154 coordinates NAD(+). The Proton acceptor role is filled by K172. E243, D244, and D267 together coordinate a divalent metal cation. 2 residues coordinate NAD(+): D267 and N415.

This sequence belongs to the malic enzymes family. In terms of assembly, homotetramer. Mg(2+) is required as a cofactor. The cofactor is Mn(2+).

It catalyses the reaction (S)-malate + NAD(+) = pyruvate + CO2 + NADH. It carries out the reaction oxaloacetate + H(+) = pyruvate + CO2. The sequence is that of NAD-dependent malic enzyme from Shewanella baltica (strain OS223).